We begin with the raw amino-acid sequence, 591 residues long: DDB1- and CUL4-associated factor 8 (591 aa).

Basic and acidic residues predominate over residues 1–14 (MSSKRPSTDGRRDL). The interval 1 to 140 (MSSKRPSTDG…EDWVSSETTA (140 aa)) is disordered. Residues Ser-21 and Ser-22 each carry the phosphoserine modification. The Nuclear export signal signature appears at 39–50 (IEVEASDLSLSL). Basic and acidic residues-rich tracts occupy residues 65–99 (RGTD…HGHS) and 118–131 (SRDQ…RALE). Phosphoserine occurs at positions 99, 123, and 124. WD repeat units follow at residues 185–224 (GHTG…PVLD), 228–269 (GHKS…CCKN), 275–315 (QHKG…PASK), 323–363 (EKKV…ENEN), 379–418 (ESKA…GAQY), 426–466 (RNNA…IIQF), and 470–509 (DKGG…STEL). The residue at position 198 (Arg-198) is an Omega-N-methylarginine; by PRMT1. A disordered region spans residues 552 to 591 (HRRWREPGVGATDADSDESPSSSDTSDEEEGPDRVQCMPS).

It belongs to the WD repeat DCAF8 family. As to quaternary structure, interacts with DDB1, CUL4A and CUL4B. Interacts with KPNA1, KPNB1 and XPO1.

The protein localises to the nucleus. The protein resides in the cytoplasm. It participates in protein modification; protein ubiquitination. May function as a substrate receptor for CUL4-DDB1 E3 ubiquitin-protein ligase complex. The protein is DDB1- and CUL4-associated factor 8 (Dcaf8) of Rattus norvegicus (Rat).